The chain runs to 500 residues: Cytochrome P450 71B9 (500 aa).

Residues 1 to 21 (MATIWFLSLLFLCCILLAAFK) traverse the membrane as a helical segment. Residue C440 participates in heme binding.

It belongs to the cytochrome P450 family. Heme is required as a cofactor.

It is found in the membrane. This Arabidopsis thaliana (Mouse-ear cress) protein is Cytochrome P450 71B9 (CYP71B9).